A 397-amino-acid chain; its full sequence is MKKLLKSVLVFAALSSASSLQALPVGNPAEPSLMIDGILWEGFGGDPCDPCATWCDAISMRVGYYGDFVFDRVLKTDVNKEFQMGAAPTTNDAADLQNDPKTNVARPNPAYGKHMQDAEMFTNAAYMALNIWDRFDVFCTLGATTGYLKGNSASFNLVGLFGTKTKSSDFNTAKLVPNIALNRAVVELYTDTTFAWSVGARAALWECGCATLGASFQYAQSKPKVEELNVLCNASEFTINKPKGYVGAEFPLDITAGTEAATGTKDASIDYHEWQASLALSYRLNMFTPYIGVKWSRVSFDADTIRIAQPKLAEAILDVTTLNPTIAGKGTVVASGSDNDLADTMQIVSLQLNKMKSRKSCGIAVGTTIVDADKYAVTVETRLIDERAAHVNAQFRF.

A signal peptide spans 1–22 (MKKLLKSVLVFAALSSASSLQA).

The protein belongs to the chlamydial porin (CP) (TC 1.B.2) family. Part of a disulfide cross-linked outer membrane complex (COMC) composed of the major outer membrane porin (MOMP), the small cysteine-rich protein (OmcA) and the large cysteine-rich periplasmic protein (OmcB).

It is found in the cell outer membrane. Its function is as follows. In elementary bodies (EBs, the infectious stage, which is able to survive outside the host cell) provides the structural integrity of the outer envelope through disulfide cross-links with the small cysteine-rich protein and the large cysteine-rich periplasmic protein. It has been described in publications as the Sarkosyl-insoluble COMC (Chlamydia outer membrane complex), and serves as the functional equivalent of peptidoglycan. Permits diffusion of specific solutes through the outer membrane. The protein is Major outer membrane porin, serovar H (ompA) of Chlamydia trachomatis.